The following is a 424-amino-acid chain: 3-phosphoshikimate 1-carboxyvinyltransferase (424 aa).

Residues lysine 21, serine 22, and arginine 26 each contribute to the 3-phosphoshikimate site. Lysine 21 is a phosphoenolpyruvate binding site. Glycine 92 and arginine 120 together coordinate phosphoenolpyruvate. Serine 163, serine 164, glutamine 165, serine 191, aspartate 306, and lysine 333 together coordinate 3-phosphoshikimate. Residue glutamine 165 coordinates phosphoenolpyruvate. The active-site Proton acceptor is the aspartate 306. Residues arginine 337, arginine 379, and lysine 405 each contribute to the phosphoenolpyruvate site.

This sequence belongs to the EPSP synthase family. In terms of assembly, monomer.

Its subcellular location is the cytoplasm. It catalyses the reaction 3-phosphoshikimate + phosphoenolpyruvate = 5-O-(1-carboxyvinyl)-3-phosphoshikimate + phosphate. It functions in the pathway metabolic intermediate biosynthesis; chorismate biosynthesis; chorismate from D-erythrose 4-phosphate and phosphoenolpyruvate: step 6/7. Catalyzes the transfer of the enolpyruvyl moiety of phosphoenolpyruvate (PEP) to the 5-hydroxyl of shikimate-3-phosphate (S3P) to produce enolpyruvyl shikimate-3-phosphate and inorganic phosphate. In Clostridium perfringens (strain ATCC 13124 / DSM 756 / JCM 1290 / NCIMB 6125 / NCTC 8237 / Type A), this protein is 3-phosphoshikimate 1-carboxyvinyltransferase.